Reading from the N-terminus, the 123-residue chain is Small ribosomal subunit protein uS12cz/uS12cy (123 aa).

Belongs to the universal ribosomal protein uS12 family. Part of the 30S ribosomal subunit.

It is found in the plastid. It localises to the chloroplast. Functionally, with S4 and S5 plays an important role in translational accuracy. Located at the interface of the 30S and 50S subunits. The polypeptide is Small ribosomal subunit protein uS12cz/uS12cy (rps12-A) (Atropa belladonna (Belladonna)).